A 212-amino-acid chain; its full sequence is Adenylate kinase (212 aa).

10–15 is an ATP binding site; that stretch reads GAGKGT. An NMP region spans residues 30-59; it reads STGDMFRAAMANQTEMGRLAKSYIDKGELV. Residues threonine 31, arginine 36, 57–59, 86–89, and glutamine 93 contribute to the AMP site; these read ELV and GYPR. Positions 127-159 are LID; sequence GRIINRKTGETFHKVFNPPVDYKEEDYYQREDD. Residues arginine 128 and 137-138 each bind ATP; that span reads TF. The AMP site is built by arginine 156 and arginine 167. Glutamine 195 is an ATP binding site.

In terms of assembly, monomer.

The protein localises to the cytoplasm. The enzyme catalyses AMP + ATP = 2 ADP. Its pathway is purine metabolism; AMP biosynthesis via salvage pathway; AMP from ADP: step 1/1. In terms of biological role, catalyzes the reversible transfer of the terminal phosphate group between ATP and AMP. Plays an important role in cellular energy homeostasis and in adenine nucleotide metabolism. This chain is Adenylate kinase, found in Streptococcus pyogenes serotype M6 (strain ATCC BAA-946 / MGAS10394).